The following is a 189-amino-acid chain: Interferon alpha-16 (189 aa).

Positions 1–23 are cleaved as a signal peptide; that stretch reads MALSFSLLMAVLVLSYKSICSLG. 2 cysteine pairs are disulfide-bonded: cysteine 24/cysteine 122 and cysteine 52/cysteine 162.

The protein belongs to the alpha/beta interferon family.

Its subcellular location is the secreted. Produced by macrophages, IFN-alpha have antiviral activities. Interferon stimulates the production of two enzymes: a protein kinase and an oligoadenylate synthetase. In Homo sapiens (Human), this protein is Interferon alpha-16 (IFNA16).